The primary structure comprises 78 residues: MSKVCIVTGKRPATGNNVSHAQNKTKRRFLPNLHAHRFWVESENRYIKLRVSSKGMRIIDKKGIDTVLSDLRAQGHKI.

This sequence belongs to the bacterial ribosomal protein bL28 family.

The protein is Large ribosomal subunit protein bL28 of Francisella tularensis subsp. holarctica (strain FTNF002-00 / FTA).